The chain runs to 457 residues: tRNA-2-methylthio-N(6)-dimethylallyladenosine synthase (457 aa).

The region spanning 4–119 is the MTTase N-terminal domain; sequence RNFHIITFGC…APDAIERLYA (116 aa). The [4Fe-4S] cluster site is built by Cys-13, Cys-48, Cys-82, Cys-164, Cys-168, and Cys-171. Residues 150-385 form the Radical SAM core domain; that stretch reads NTLALMAYVN…QATQLEHSTS (236 aa). One can recognise a TRAM domain in the interval 388 to 456; that stretch reads KSRVGVETTV…KHSLVAEPLI (69 aa).

The protein belongs to the methylthiotransferase family. MiaB subfamily. As to quaternary structure, monomer. [4Fe-4S] cluster is required as a cofactor.

It localises to the cytoplasm. The catalysed reaction is N(6)-dimethylallyladenosine(37) in tRNA + (sulfur carrier)-SH + AH2 + 2 S-adenosyl-L-methionine = 2-methylsulfanyl-N(6)-dimethylallyladenosine(37) in tRNA + (sulfur carrier)-H + 5'-deoxyadenosine + L-methionine + A + S-adenosyl-L-homocysteine + 2 H(+). In terms of biological role, catalyzes the methylthiolation of N6-(dimethylallyl)adenosine (i(6)A), leading to the formation of 2-methylthio-N6-(dimethylallyl)adenosine (ms(2)i(6)A) at position 37 in tRNAs that read codons beginning with uridine. This chain is tRNA-2-methylthio-N(6)-dimethylallyladenosine synthase, found in Lawsonia intracellularis (strain PHE/MN1-00).